The chain runs to 164 residues: 6,7-dimethyl-8-ribityllumazine synthase 1 (164 aa).

5-amino-6-(D-ribitylamino)uracil is bound by residues Phe27, 58 to 60, and 87 to 89; these read SLE and TII. Residue 92-93 coordinates (2S)-2-hydroxy-3-oxobutyl phosphate; the sequence is DT. His95 functions as the Proton donor in the catalytic mechanism. Asn120 contributes to the 5-amino-6-(D-ribitylamino)uracil binding site. Arg134 contributes to the (2S)-2-hydroxy-3-oxobutyl phosphate binding site.

It belongs to the DMRL synthase family. In terms of assembly, homopentamer.

The enzyme catalyses (2S)-2-hydroxy-3-oxobutyl phosphate + 5-amino-6-(D-ribitylamino)uracil = 6,7-dimethyl-8-(1-D-ribityl)lumazine + phosphate + 2 H2O + H(+). Its pathway is cofactor biosynthesis; riboflavin biosynthesis; riboflavin from 2-hydroxy-3-oxobutyl phosphate and 5-amino-6-(D-ribitylamino)uracil: step 1/2. Its function is as follows. Catalyzes the formation of 6,7-dimethyl-8-ribityllumazine by condensation of 5-amino-6-(D-ribitylamino)uracil with 3,4-dihydroxy-2-butanone 4-phosphate. This is the penultimate step in the biosynthesis of riboflavin. This is 6,7-dimethyl-8-ribityllumazine synthase 1 (ribH1) from Mesorhizobium japonicum (strain LMG 29417 / CECT 9101 / MAFF 303099) (Mesorhizobium loti (strain MAFF 303099)).